Consider the following 490-residue polypeptide: COP9 signalosome complex subunit 2 (490 aa).

The segment covering 1 to 30 (MSDDDFMQDSDQEYDFEYEDDEEEDTGDVD) has biased composition (acidic residues). The interval 1–32 (MSDDDFMQDSDQEYDFEYEDDEEEDTGDVDIE) is disordered. Residues 250 to 418 (SEENWKEAQS…GVLELESRED (169 aa)) form the PCI domain. A disordered region spans residues 469–490 (DTMRSMGSGKRGRRVGLTQRAY).

It belongs to the CSN2 family. In terms of assembly, component of the COP9 signalosome (CSN) complex.

It is found in the cytoplasm. Its subcellular location is the nucleus. Functionally, component of the COP9 signalosome (CSN) complex that acts as an regulator of the ubiquitin (Ubl) conjugation pathway by mediating the deneddylation of the cullin subunit of SCF-type E3 ubiquitin-protein ligase complexes. The CSN complex is involved in the regulation of the circadian clock through its control of the stability of the SCF(FWD-1) complex. This Neurospora crassa (strain ATCC 24698 / 74-OR23-1A / CBS 708.71 / DSM 1257 / FGSC 987) protein is COP9 signalosome complex subunit 2 (csn-2).